The sequence spans 280 residues: MTRKIAIYGKGGIGKSTTTQNTAAAMAYFFGKRIMIHGCDPKADSTRLILGGMMQTTVMDTLREEGEEGVTLDRVRLQGFGEIDCVESGGPEPGVGCAGRGVITAINLMEDLNAYGDELDFVFFDVLGDVVCGGFAMPVREGKAQEIYIVASGEMMALYAANNICRGMVKYAEQSGVRLGGIICNSRRVEGERELIEEFCARLGTRMIMFVPRDNIVQKAEFNRKTVTEFAPDSEQAQVYRELARRIIENDHFVIPTPMTMDEMESLVLKYGLLDLGEAS.

9-16 (GKGGIGKS) serves as a coordination point for ATP. C97 lines the [4Fe-4S] cluster pocket. R100 is subject to ADP-ribosylarginine; by dinitrogenase reductase ADP-ribosyltransferase. C132 contacts [4Fe-4S] cluster.

It belongs to the NifH/BchL/ChlL family. In terms of assembly, homodimer. [4Fe-4S] cluster is required as a cofactor. The reversible ADP-ribosylation of Arg-100 inactivates the nitrogenase reductase and regulates nitrogenase activity.

It catalyses the reaction N2 + 8 reduced [2Fe-2S]-[ferredoxin] + 16 ATP + 16 H2O = H2 + 8 oxidized [2Fe-2S]-[ferredoxin] + 2 NH4(+) + 16 ADP + 16 phosphate + 6 H(+). In terms of biological role, the key enzymatic reactions in nitrogen fixation are catalyzed by the nitrogenase complex, which has 2 components: the iron protein and the molybdenum-iron protein. This chain is Nitrogenase iron protein, found in Desulforudis audaxviator (strain MP104C).